Consider the following 243-residue polypeptide: Pleckstrin homology domain-containing family B member 1 (243 aa).

The region spanning 21 to 128 (ALVRGGWLWR…WKTALLEANS (108 aa)) is the PH domain.

As to quaternary structure, homodimer. Interacts (via PH domain) with MYO1C. Interacts (via PH domain) with MYO7A. Binds transducins. In terms of tissue distribution, highly expressed in retina and brain. Levels are very low or not detectable in all other tissues tested.

It localises to the membrane. The protein localises to the cytoplasm. This Homo sapiens (Human) protein is Pleckstrin homology domain-containing family B member 1 (PLEKHB1).